A 944-amino-acid chain; its full sequence is Spindle pole body component 110 (944 aa).

A Phosphothreonine modification is found at Thr18. Residues Ile23–Lys110 are disordered. Polar residues predominate over residues Asn28–Gly46. The Nuclear localization signal signature appears at Lys54 to Arg59. Ser60 carries the phosphoserine; by MPS1 modification. Thr64 and Thr68 each carry phosphothreonine; by MPS1. Residues Ser67–Asp78 are compositionally biased toward polar residues. Ser80 carries the phosphoserine modification. The segment covering Asn96–Lys110 has biased composition (basic and acidic residues). Residues Glu164 to Leu791 are a coiled coil. The residue at position 529 (Ser529) is a Phosphoserine. 2 short sequence motifs (nuclear localization signal) span residues Lys726 to Arg731 and Arg742 to Lys747. The calmodulin-binding stretch occupies residues Ser900 to Arg927.

It belongs to the SPC110 family. Homodimer. Component of the SPC110 complex containing at least CMD1, SPC29 and SCP110. Interacts with SPC97 and SPC98.

Its subcellular location is the nucleus. It localises to the cytoplasm. The protein localises to the cytoskeleton. The protein resides in the microtubule organizing center. It is found in the spindle pole body. Component of the spindle pole body (SPB) required for the proper execution of spindle pole body (SPB) duplication. Potential role in cross-linking filaments or anchoring other molecules. It is essential for growth. The sequence is that of Spindle pole body component 110 (SPC110) from Saccharomyces cerevisiae (strain ATCC 204508 / S288c) (Baker's yeast).